The primary structure comprises 66 residues: MAKMKTKSAAAKRFSVTGAGKVKFKKMNLRHILTKKAPKRKRKLRHAGFLSKVELKVVKRKLLPYA.

The protein belongs to the bacterial ribosomal protein bL35 family.

The protein is Large ribosomal subunit protein bL35 of Treponema pallidum (strain Nichols).